The chain runs to 339 residues: RNA 3'-terminal phosphate cyclase (339 aa).

ATP-binding positions include Q103 and 283–287; that span reads HLADQ. Catalysis depends on H308, which acts as the Tele-AMP-histidine intermediate.

Belongs to the RNA 3'-terminal cyclase family. Type 1 subfamily.

It is found in the cytoplasm. It carries out the reaction a 3'-end 3'-phospho-ribonucleotide-RNA + ATP = a 3'-end 2',3'-cyclophospho-ribonucleotide-RNA + AMP + diphosphate. Catalyzes the conversion of 3'-phosphate to a 2',3'-cyclic phosphodiester at the end of RNA. The mechanism of action of the enzyme occurs in 3 steps: (A) adenylation of the enzyme by ATP; (B) transfer of adenylate to an RNA-N3'P to produce RNA-N3'PP5'A; (C) and attack of the adjacent 2'-hydroxyl on the 3'-phosphorus in the diester linkage to produce the cyclic end product. The biological role of this enzyme is unknown but it is likely to function in some aspects of cellular RNA processing. This Salmonella enteritidis PT4 (strain P125109) protein is RNA 3'-terminal phosphate cyclase.